A 170-amino-acid chain; its full sequence is Adenine phosphoribosyltransferase (170 aa).

This sequence belongs to the purine/pyrimidine phosphoribosyltransferase family. Homodimer.

The protein localises to the cytoplasm. The catalysed reaction is AMP + diphosphate = 5-phospho-alpha-D-ribose 1-diphosphate + adenine. It functions in the pathway purine metabolism; AMP biosynthesis via salvage pathway; AMP from adenine: step 1/1. In terms of biological role, catalyzes a salvage reaction resulting in the formation of AMP, that is energically less costly than de novo synthesis. This chain is Adenine phosphoribosyltransferase, found in Cyanothece sp. (strain PCC 7425 / ATCC 29141).